The primary structure comprises 435 residues: NADH-ubiquinone oxidoreductase chain 4 (435 aa).

13 helical membrane passes run 27 to 47 (VLTILSMGAASVATGGVELNG), 53 to 73 (FVMGLMITLTLFVAILSYLSS), 80 to 100 (ASFNLMVISISLILVMSFSVS), 102 to 122 (FFLFFFFFESVLAPLLLLIVG), 132 to 152 (AGGYMVIYTVFGSLFFLWGVS), 177 to 197 (LWWLYILGFLIKLPMYPFHLW), 206 to 226 (PVAGSMLLAGVVLKLGGYGLL), 239 to 259 (VFFVLLLSVNLAGGFYAGLAC), 267 to 285 (CLVAYSSVAHMSLVLLGVL), 295 to 317 (AIIIMVGHGLCSSGLFSYVNAIY), 324 to 344 (LLVMNKGGXLFCPVLVLMCFL), 372 to 394 (SXAFLFILGLMSFISACFSLYLY), and 414 to 434 (LCDVFVLLSHWVPLNFLFMFM).

Belongs to the complex I subunit 4 family.

The protein localises to the mitochondrion membrane. It catalyses the reaction a ubiquinone + NADH + 5 H(+)(in) = a ubiquinol + NAD(+) + 4 H(+)(out). Functionally, core subunit of the mitochondrial membrane respiratory chain NADH dehydrogenase (Complex I) that is believed to belong to the minimal assembly required for catalysis. Complex I functions in the transfer of electrons from NADH to the respiratory chain. The immediate electron acceptor for the enzyme is believed to be ubiquinone. The polypeptide is NADH-ubiquinone oxidoreductase chain 4 (ND4) (Mytilus edulis (Blue mussel)).